The primary structure comprises 121 residues: Fluoride-specific ion channel FluC 1 (121 aa).

The next 4 membrane-spanning stretches (helical) occupy residues 3–23, 35–55, 64–84, and 92–112; these read YVYI…ISFL, IANL…IAFF, AITT…LELI, and FITL…LCYV. Na(+)-binding residues include Gly71 and Thr74.

Belongs to the fluoride channel Fluc/FEX (TC 1.A.43) family.

It localises to the cell membrane. It carries out the reaction fluoride(in) = fluoride(out). With respect to regulation, na(+) is not transported, but it plays an essential structural role and its presence is essential for fluoride channel function. Functionally, fluoride-specific ion channel. Important for reducing fluoride concentration in the cell, thus reducing its toxicity. The protein is Fluoride-specific ion channel FluC 1 of Staphylococcus aureus (strain NCTC 8325 / PS 47).